The chain runs to 278 residues: Bifunctional protein FolD (278 aa).

NADP(+) contacts are provided by residues 165–167 (GRS), Ser-190, and Thr-231.

It belongs to the tetrahydrofolate dehydrogenase/cyclohydrolase family. As to quaternary structure, homodimer.

It catalyses the reaction (6R)-5,10-methylene-5,6,7,8-tetrahydrofolate + NADP(+) = (6R)-5,10-methenyltetrahydrofolate + NADPH. It carries out the reaction (6R)-5,10-methenyltetrahydrofolate + H2O = (6R)-10-formyltetrahydrofolate + H(+). It participates in one-carbon metabolism; tetrahydrofolate interconversion. Its function is as follows. Catalyzes the oxidation of 5,10-methylenetetrahydrofolate to 5,10-methenyltetrahydrofolate and then the hydrolysis of 5,10-methenyltetrahydrofolate to 10-formyltetrahydrofolate. This is Bifunctional protein FolD from Clostridium acetobutylicum (strain ATCC 824 / DSM 792 / JCM 1419 / IAM 19013 / LMG 5710 / NBRC 13948 / NRRL B-527 / VKM B-1787 / 2291 / W).